The chain runs to 559 residues: Chaperonin GroEL 3 (559 aa).

ATP-binding positions include 88–92, Gly-426, and Asp-507; that span reads DGTTT.

It belongs to the chaperonin (HSP60) family. As to quaternary structure, forms a cylinder of 14 subunits composed of two heptameric rings stacked back-to-back. Interacts with the co-chaperonin GroES.

It localises to the cytoplasm. It carries out the reaction ATP + H2O + a folded polypeptide = ADP + phosphate + an unfolded polypeptide.. In terms of biological role, together with its co-chaperonin GroES, plays an essential role in assisting protein folding. The GroEL-GroES system forms a nano-cage that allows encapsulation of the non-native substrate proteins and provides a physical environment optimized to promote and accelerate protein folding. This is Chaperonin GroEL 3 from Methylococcus capsulatus (strain ATCC 33009 / NCIMB 11132 / Bath).